The sequence spans 96 residues: Co-chaperonin GroES (96 aa).

Belongs to the GroES chaperonin family. Heptamer of 7 subunits arranged in a ring. Interacts with the chaperonin GroEL.

The protein localises to the cytoplasm. Its function is as follows. Together with the chaperonin GroEL, plays an essential role in assisting protein folding. The GroEL-GroES system forms a nano-cage that allows encapsulation of the non-native substrate proteins and provides a physical environment optimized to promote and accelerate protein folding. GroES binds to the apical surface of the GroEL ring, thereby capping the opening of the GroEL channel. This chain is Co-chaperonin GroES, found in Haemophilus influenzae (strain PittGG).